The following is a 308-amino-acid chain: uncharacterized protein (308 aa).

This is an uncharacterized protein from Treponema pallidum (strain Nichols).